A 792-amino-acid polypeptide reads, in one-letter code: G-type lectin S-receptor-like serine/threonine-protein kinase At1g61440 (792 aa).

An N-terminal signal peptide occupies residues 1–17; it reads MGKKRIVLLLFISFSYA. Residues 18–137 enclose the Bulb-type lectin domain; that stretch reads EITKESPLSI…VTGRTLWESF (120 aa). At 18–419 the chain is on the extracellular side; it reads EITKESPLSI…ELDVHKRKMT (402 aa). N-linked (GlcNAc...) asparagine glycans are attached at residues asparagine 46, asparagine 127, and asparagine 229. An EGF-like; atypical domain is found at 271–307; it reads PANSCDIYGVCGPFGFCVISDPPKCKCFKGFVPKSIE. Intrachain disulfides connect cysteine 275–cysteine 287 and cysteine 281–cysteine 295. 3 N-linked (GlcNAc...) asparagine glycosylation sites follow: asparagine 313, asparagine 329, and asparagine 368. The region spanning 326-408 is the PAN domain; that stretch reads CQGNSTGKDA…GEILSIRLAH (83 aa). Cystine bridges form between cysteine 361-cysteine 382 and cysteine 365-cysteine 371. The helical transmembrane segment at 420–440 threads the bilayer; sequence IVASTVSLTLFVILGFATFGF. Topologically, residues 441-792 are cytoplasmic; the sequence is WRNRVKHHDA…EMTESVILGR (352 aa). Residues 478–763 enclose the Protein kinase domain; sequence FSLSNKLGHG…DLPLPKQPTF (286 aa). ATP contacts are provided by residues 484-492 and lysine 506; that span reads LGHGGFGSV. 2 positions are modified to phosphoserine: serine 512 and serine 527. Positions 567-584 are caM-binding; sequence RKRLELDWPKRFDIIQGI. The active-site Proton acceptor is the aspartate 603. Phosphoserine occurs at positions 607 and 620. Position 637 is a phosphothreonine (threonine 637). Phosphoserine is present on residues serine 680 and serine 774.

This sequence belongs to the protein kinase superfamily. Ser/Thr protein kinase family.

The protein localises to the cell membrane. The catalysed reaction is L-seryl-[protein] + ATP = O-phospho-L-seryl-[protein] + ADP + H(+). It catalyses the reaction L-threonyl-[protein] + ATP = O-phospho-L-threonyl-[protein] + ADP + H(+). The polypeptide is G-type lectin S-receptor-like serine/threonine-protein kinase At1g61440 (Arabidopsis thaliana (Mouse-ear cress)).